The primary structure comprises 138 residues: Transcription antitermination protein NusB (138 aa).

This sequence belongs to the NusB family.

In terms of biological role, involved in transcription antitermination. Required for transcription of ribosomal RNA (rRNA) genes. Binds specifically to the boxA antiterminator sequence of the ribosomal RNA (rrn) operons. The protein is Transcription antitermination protein NusB of Desulforudis audaxviator (strain MP104C).